The following is a 264-amino-acid chain: MFFKQLAVLSFATSALAAHGVRNPGTNSLNFNRIDKRFTFPIPESQGSQTFEATYTISGNETFDGGMKTYGRGVDCSGQAEGGDSDAVFIVKDGGTLKNAIIGADQIEGVHCEGSCTIENVWWEAVCEDALSLKTGDGPFTVIGGGAQNADDKVIQHNGGGTVSISGFTAYNFGKLYRSCGNCDEMYERHVTLESVTAVSGSASLVGINSNYGDTATIKSDTCVTDVDTVCTEYEGTDNNDEEPQEISTGPSNACQYTDPLPSC.

The first 17 residues, 1-17, serve as a signal peptide directing secretion; sequence MFFKQLAVLSFATSALA. Residue Asn-60 is glycosylated (N-linked (GlcNAc...) asparagine). The interval 234-264 is disordered; that stretch reads YEGTDNNDEEPQEISTGPSNACQYTDPLPSC. Positions 235–245 are enriched in acidic residues; the sequence is EGTDNNDEEPQ. Polar residues predominate over residues 246 to 256; that stretch reads EISTGPSNACQ.

This sequence belongs to the polysaccharide lyase 3 family. Ca(2+) serves as cofactor.

Its subcellular location is the secreted. The catalysed reaction is Eliminative cleavage of (1-&gt;4)-alpha-D-galacturonan to give oligosaccharides with 4-deoxy-alpha-D-galact-4-enuronosyl groups at their non-reducing ends.. Functionally, pectinolytic enzyme consist of four classes of enzymes: pectin lyase, polygalacturonase, pectin methylesterase and rhamnogalacturonase. Among pectinolytic enzymes, pectin lyase is the most important in depolymerization of pectin, since it cleaves internal glycosidic bonds of highly methylated pectins. Favors pectate, the anion, over pectin, the methyl ester. In Emericella nidulans (strain FGSC A4 / ATCC 38163 / CBS 112.46 / NRRL 194 / M139) (Aspergillus nidulans), this protein is Probable pectate lyase D (plyD).